The sequence spans 100 residues: Urease subunit gamma (100 aa).

Belongs to the urease gamma subunit family. Heterotrimer of UreA (gamma), UreB (beta) and UreC (alpha) subunits. Three heterotrimers associate to form the active enzyme.

It localises to the cytoplasm. It catalyses the reaction urea + 2 H2O + H(+) = hydrogencarbonate + 2 NH4(+). Its pathway is nitrogen metabolism; urea degradation; CO(2) and NH(3) from urea (urease route): step 1/1. The polypeptide is Urease subunit gamma (Granulibacter bethesdensis (strain ATCC BAA-1260 / CGDNIH1)).